Here is a 1005-residue protein sequence, read N- to C-terminus: Pikachurin (1005 aa).

The N-terminal stretch at Met-1–Ser-24 is a signal peptide. 2 Fibronectin type-III domains span residues Pro-37–Gln-136 and Ala-144–Pro-239. Residue Asn-47 is glycosylated (N-linked (GlcNAc...) asparagine). The disordered stretch occupies residues Pro-281–Gly-328. Residues Ala-305 to Glu-314 are compositionally biased toward polar residues. The EGF-like 1 domain maps to Phe-339–Ser-377. Disulfide bonds link Cys-343/Cys-354, Cys-348/Cys-365, Cys-367/Cys-376, Cys-530/Cys-560, Cys-565/Cys-576, Cys-570/Cys-586, Cys-588/Cys-597, Cys-784/Cys-795, Cys-789/Cys-804, Cys-806/Cys-815, and Cys-975/Cys-1002. Positions Ile-382–Cys-560 constitute a Laminin G-like 1 domain. EGF-like domains are found at residues Ser-561–Glu-598 and Ala-780–Gln-816. The 180-residue stretch at Ile-605–Cys-784 folds into the Laminin G-like 2 domain. Residues Ile-823–Cys-1002 enclose the Laminin G-like 3 domain.

Interacts with DAG1 alpha-dystroglycan. Interacts with GPR158 and GPR179; transsynaptic interaction is required for synaptic organization of photoreceptor cells. In terms of processing, O-glycosylated; contains chondroitin sulfate and heparan sulfate.

It localises to the secreted. It is found in the extracellular space. The protein localises to the extracellular matrix. Its subcellular location is the synaptic cleft. The protein resides in the presynaptic active zone. In terms of biological role, involved in both the retinal photoreceptor ribbon synapse formation and physiological functions of visual perception. Plays a key role in the synaptic organization of photoreceptors by mediating transsynaptic interaction between alpha-dystroglycan and GPR179 on the postsynaptic membrane. Necessary for proper bipolar dendritic tip apposition to the photoreceptor ribbon synapse. Promotes matrix assembly and cell adhesiveness. The sequence is that of Pikachurin (Egflam) from Rattus norvegicus (Rat).